The chain runs to 40 residues: Accessory gland-specific peptide 57Db (40 aa).

An N-terminal signal peptide occupies residues 1–17; it reads MKITSALVLLFAGVAFA.

Lumen fluid of male accessory glands, becomes seminal fluid.

It localises to the secreted. In terms of biological role, transferred from male to female during mating and may affect egglaying and behavior after mating. The polypeptide is Accessory gland-specific peptide 57Db (Mst57Db) (Drosophila melanogaster (Fruit fly)).